The sequence spans 1034 residues: MQISDTGRSHTPDFHAVLAREDWHNQTITHLNRLPAHPVFASWRDELAARDNLPSSRRRQLDGSGSSLTPAARLPSMRVVTQDLPDCRGTPVPSNWQMEGYDAPIYTNVRYPIDTTPPRVPEDNPTGCYSLHFTVEDTWRENGQTQIIFDGVNSAFHLWCNGVWVGYSQDSRLPAAFDLSPFLRPGDNRLCVMVMRWSAGSWLEDQDMWRMSGIFRSVWLLNKPQQRLCDVQLTPALDALYRDGTLQVQATIEATEAALAGLSVGVSLWRGEEQFAAGRQPLGTPTVDERGHYAERVDFSLAVATPAHWSAETPNCYRAVVTLWRGDELLEAEAWDIGFRRIEIADGLLRLNGKPLLIRGVNRHEHHHLRGQVVTEADMVQDILLMKQNNFNAVRCSHYPNAPRWYELCNRYGLYVVDEANIETHGMVPMNRLSDDPAWLPAFSARVTRMVQSNRNHPCIIIWSLGNESGGGGNHEALYHWLKRNDPSRPVQYEGGGADTTATDIICPMYARVERDQPIPAVPKWGIKKWISLPGEQRPLILCEYAHAMGNSLGNFADYWQAFREYPRLQGGFIWDWADQAIRKTFADGSVGWAYGGDFGDKPNDRQFCMNGLVFPDRTPHPSLVEAKHAQQYFQFTLLSTSPLRVRIISEYLFRPTDNEVVRWQVQAAGEPLYHGDLTLALPPEGSDEITLLDSLILPEGARAVWLTLEVTQPQATAWSEAEHRVAWQQFPLPAPLGCRRPPCLPALPDLIVSDEVWQIRAGSQCWTIDRRTGLLSRWSVGGQEQLLTPLRDQFIRAPLDNDIGVSEVERIDPNAWVERWRSAGLYDLEAHCVQCDAQRLANETLVDCRWHYLRGEEVVIVSHWRMHFTADGTLRLAVDGERAETLPPLPRVGLHFQVADQQAPVSWLGLGPHENYPDRRSSACFARWEQPLAAMTTPYIFPTENGLRCDTQALDWGRWHISGHFHFSVQPWSTRQLMETDHWHKMQAEDGVWITLDGLHMGVGGDDSWTPSVLPQWLLSQTRWQYEVSLRSL.

The substrate site is built by Asn-108 and Asp-207. Asp-207 contacts Na(+). Mg(2+) is bound by residues Glu-423, His-425, and Glu-468. Substrate contacts are provided by residues Glu-468 and 544-547 (EYAH). The active-site Proton donor is Glu-468. Catalysis depends on Glu-544, which acts as the Nucleophile. Asn-604 is a Mg(2+) binding site. 2 residues coordinate Na(+): Phe-608 and Asn-611. Asn-611 and Trp-1010 together coordinate substrate.

This sequence belongs to the glycosyl hydrolase 2 family. As to quaternary structure, homotetramer. The cofactor is Mg(2+). Na(+) serves as cofactor.

It carries out the reaction Hydrolysis of terminal non-reducing beta-D-galactose residues in beta-D-galactosides.. The chain is Beta-galactosidase from Klebsiella pneumoniae.